A 542-amino-acid polypeptide reads, in one-letter code: MFS-type efflux pump MMF1 (542 aa).

Helical transmembrane passes span 24-44 (WTIF…MTMI), 51-71 (IVAA…AFLL), 98-118 (VIFL…VLVV), 124-144 (GLGG…LTTL), 151-171 (FGLI…LGGV), 179-199 (WIFW…VLFL), 215-235 (LDLV…IAVT), and 248-268 (VWVP…VEWI). Asn285 is a glycosylation site (N-linked (GlcNAc...) asparagine). A run of 6 helical transmembrane segments spans residues 296–316 (FLHG…FQAI), 326–346 (IWSF…GLLI), 355–375 (LIFI…HWSV), 384–404 (ISQI…LPPI), 419–439 (AYAF…TTIF), and 490–510 (ISDS…STFL).

This sequence belongs to the major facilitator superfamily.

Its subcellular location is the cell membrane. Functionally, glycosyltransferase; part of the gene cluster that mediates the biosynthesis of mannosylerythritol lipids (MELs), surface-active substances that enhance the availability of water-insoluble substrates. MMF1 is directly involved in the secretiopn of MALs. This is MFS-type efflux pump MMF1 from Pseudozyma antarctica (strain T-34) (Yeast).